The primary structure comprises 864 residues: Leucine--tRNA ligase (864 aa).

The short motif at 42–52 (PYPSGKLHMGH) is the 'HIGH' region element. The short motif at 624–628 (KMSKS) is the 'KMSKS' region element. Position 627 (Lys627) interacts with ATP.

This sequence belongs to the class-I aminoacyl-tRNA synthetase family.

The protein localises to the cytoplasm. It catalyses the reaction tRNA(Leu) + L-leucine + ATP = L-leucyl-tRNA(Leu) + AMP + diphosphate. In Burkholderia cenocepacia (strain ATCC BAA-245 / DSM 16553 / LMG 16656 / NCTC 13227 / J2315 / CF5610) (Burkholderia cepacia (strain J2315)), this protein is Leucine--tRNA ligase.